We begin with the raw amino-acid sequence, 41 residues long: Large ribosomal subunit protein bL36 (41 aa).

Belongs to the bacterial ribosomal protein bL36 family.

This Rhizobium rhizogenes (strain K84 / ATCC BAA-868) (Agrobacterium radiobacter) protein is Large ribosomal subunit protein bL36.